The sequence spans 132 residues: Phosphoribosyl-AMP cyclohydrolase (132 aa).

Aspartate 82 is a binding site for Mg(2+). Cysteine 83 contributes to the Zn(2+) binding site. Residues aspartate 84 and aspartate 86 each coordinate Mg(2+). Zn(2+) contacts are provided by cysteine 99 and cysteine 106.

It belongs to the PRA-CH family. Homodimer. It depends on Mg(2+) as a cofactor. Zn(2+) serves as cofactor.

The protein resides in the cytoplasm. It catalyses the reaction 1-(5-phospho-beta-D-ribosyl)-5'-AMP + H2O = 1-(5-phospho-beta-D-ribosyl)-5-[(5-phospho-beta-D-ribosylamino)methylideneamino]imidazole-4-carboxamide. The protein operates within amino-acid biosynthesis; L-histidine biosynthesis; L-histidine from 5-phospho-alpha-D-ribose 1-diphosphate: step 3/9. In terms of biological role, catalyzes the hydrolysis of the adenine ring of phosphoribosyl-AMP. The protein is Phosphoribosyl-AMP cyclohydrolase of Paramagnetospirillum magneticum (strain ATCC 700264 / AMB-1) (Magnetospirillum magneticum).